A 98-amino-acid polypeptide reads, in one-letter code: Protein S100-A11 (98 aa).

T5 bears the Phosphothreonine mark. EF-hand domains are found at residues 12 to 47 (LIAV…AFTK) and 50 to 85 (KDPG…LAIA). K22 is subject to N6-acetyllysine. S26, H28, E33, D63, N65, D67, Q69, and E74 together coordinate Ca(2+).

The protein belongs to the S-100 family. As to quaternary structure, homodimer; disulfide-linked. Post-translationally, phosphorylation at Thr-5 significantly suppresses homodimerization and promotes association with NCL/nucleolin which induces nuclear translocation.

It is found in the cytoplasm. The protein localises to the nucleus. In terms of biological role, facilitates the differentiation and the cornification of keratinocytes. The sequence is that of Protein S100-A11 (S100a11) from Rattus norvegicus (Rat).